Consider the following 160-residue polypeptide: Transcriptional repressor NrdR (160 aa).

A zinc finger lies at 3-34 (CPFCRHADTQVVDSRVSEDGATIRRRRRCPAC). Residues 49-139 (PSVVKKDGSR…VYRRFEDVSE (91 aa)) enclose the ATP-cone domain.

This sequence belongs to the NrdR family. Requires Zn(2+) as cofactor.

Its function is as follows. Negatively regulates transcription of bacterial ribonucleotide reductase nrd genes and operons by binding to NrdR-boxes. The protein is Transcriptional repressor NrdR of Paraburkholderia phytofirmans (strain DSM 17436 / LMG 22146 / PsJN) (Burkholderia phytofirmans).